The primary structure comprises 188 residues: Insulin-like peptide INSL6 (188 aa).

Residues 1-22 (MKQLCCSCLLWLGLLLAPFSQE) form the signal peptide. 3 cysteine pairs are disulfide-bonded: cysteine 33-cysteine 169, cysteine 45-cysteine 182, and cysteine 168-cysteine 173. Positions 53 to 158 (FSMEEQSPMT…SGLFWGNHPQ (106 aa)) are cleaved as a propeptide — connecting peptide.

This sequence belongs to the insulin family. Testis and prostate specific.

It localises to the secreted. In terms of biological role, may have a role in sperm development and fertilization. The chain is Insulin-like peptide INSL6 (Insl6) from Rattus norvegicus (Rat).